Consider the following 609-residue polypeptide: Tyrosyl-DNA phosphodiesterase 1 (609 aa).

Residues 1 to 12 are compositionally biased toward polar residues; sequence MSQESSYGKWTI. The disordered stretch occupies residues 1 to 155; it reads MSQESSYGKW…YETSGEGQDI (155 aa). At Ser61 the chain carries Phosphoserine. The segment covering 105 to 118 has biased composition (basic and acidic residues); sequence QPKRVLPQEKKHVS. Phosphoserine occurs at positions 119 and 132. Thr148 bears the Phosphothreonine mark. Ser149 carries the phosphoserine modification. The active-site Nucleophile is His264. Position 266 (Lys266) interacts with substrate. The segment at 401–404 is interaction with DNA; that stretch reads SIGS. The Proton donor/acceptor role is filled by His494. Substrate is bound at residue Lys496.

This sequence belongs to the tyrosyl-DNA phosphodiesterase family. Monomer. Ubiquitous.

The protein resides in the nucleus. The protein localises to the cytoplasm. DNA repair enzyme that can remove a variety of covalent adducts from DNA through hydrolysis of a 3'-phosphodiester bond, giving rise to DNA with a free 3' phosphate. Catalyzes the hydrolysis of dead-end complexes between DNA and the topoisomerase I active site tyrosine residue. Hydrolyzes 3'-phosphoglycolates on protruding 3' ends on DNA double-strand breaks due to DNA damage by radiation and free radicals. Acts on blunt-ended double-strand DNA breaks and on single-stranded DNA. Has low 3'exonuclease activity and can remove a single nucleoside from the 3'end of DNA and RNA molecules with 3'hydroxyl groups. Has no exonuclease activity towards DNA or RNA with a 3'phosphate. This is Tyrosyl-DNA phosphodiesterase 1 (Tdp1) from Mus musculus (Mouse).